The following is a 371-amino-acid chain: Uroporphyrinogen decarboxylase (371 aa).

Positions 1–14 are enriched in polar residues; sequence MARWATMSTETTGT. A disordered region spans residues 1-30; sequence MARWATMSTETTGTGARDEGPRPGDPADSP. Substrate contacts are provided by residues 49–53, Asp98, Tyr173, Ser228, and His342; that span reads RQAGR.

The protein belongs to the uroporphyrinogen decarboxylase family. As to quaternary structure, homodimer.

It is found in the cytoplasm. It catalyses the reaction uroporphyrinogen III + 4 H(+) = coproporphyrinogen III + 4 CO2. The protein operates within porphyrin-containing compound metabolism; protoporphyrin-IX biosynthesis; coproporphyrinogen-III from 5-aminolevulinate: step 4/4. Functionally, catalyzes the decarboxylation of four acetate groups of uroporphyrinogen-III to yield coproporphyrinogen-III. The chain is Uroporphyrinogen decarboxylase from Salinispora tropica (strain ATCC BAA-916 / DSM 44818 / JCM 13857 / NBRC 105044 / CNB-440).